Consider the following 529-residue polypeptide: Bifunctional purine biosynthesis protein PurH (529 aa).

An MGS-like domain is found at 1–148; the sequence is MQQRRPVRRA…KNHKDVAIVV (148 aa). The residue at position 287 (lysine 287) is an N6-acetyllysine.

This sequence belongs to the PurH family.

The catalysed reaction is (6R)-10-formyltetrahydrofolate + 5-amino-1-(5-phospho-beta-D-ribosyl)imidazole-4-carboxamide = 5-formamido-1-(5-phospho-D-ribosyl)imidazole-4-carboxamide + (6S)-5,6,7,8-tetrahydrofolate. The enzyme catalyses IMP + H2O = 5-formamido-1-(5-phospho-D-ribosyl)imidazole-4-carboxamide. It functions in the pathway purine metabolism; IMP biosynthesis via de novo pathway; 5-formamido-1-(5-phospho-D-ribosyl)imidazole-4-carboxamide from 5-amino-1-(5-phospho-D-ribosyl)imidazole-4-carboxamide (10-formyl THF route): step 1/1. It participates in purine metabolism; IMP biosynthesis via de novo pathway; IMP from 5-formamido-1-(5-phospho-D-ribosyl)imidazole-4-carboxamide: step 1/1. This chain is Bifunctional purine biosynthesis protein PurH, found in Escherichia coli O8 (strain IAI1).